We begin with the raw amino-acid sequence, 172 residues long: 3-phenylpropionate/cinnamic acid dioxygenase subunit beta (172 aa).

This sequence belongs to the bacterial ring-hydroxylating dioxygenase beta subunit family. In terms of assembly, this dioxygenase system consists of four proteins: the two subunits of the hydroxylase component (HcaE and HcaF), a ferredoxin (HcaC) and a ferredoxin reductase (HcaD).

The enzyme catalyses 3-phenylpropanoate + NADH + O2 + H(+) = 3-(cis-5,6-dihydroxycyclohexa-1,3-dien-1-yl)propanoate + NAD(+). It carries out the reaction (E)-cinnamate + NADH + O2 + H(+) = (2E)-3-(cis-5,6-dihydroxycyclohexa-1,3-dien-1-yl)prop-2-enoate + NAD(+). It participates in aromatic compound metabolism; 3-phenylpropanoate degradation. Functionally, part of the multicomponent 3-phenylpropionate dioxygenase. Converts 3-phenylpropionic acid (PP) and cinnamic acid (CI) into 3-phenylpropionate-dihydrodiol (PP-dihydrodiol) and cinnamic acid-dihydrodiol (CI-dihydrodiol), respectively. The chain is 3-phenylpropionate/cinnamic acid dioxygenase subunit beta from Shigella boydii serotype 4 (strain Sb227).